Here is a 141-residue protein sequence, read N- to C-terminus: Large ribosomal subunit protein uL11 (141 aa).

It belongs to the universal ribosomal protein uL11 family. As to quaternary structure, part of the ribosomal stalk of the 50S ribosomal subunit. Interacts with L10 and the large rRNA to form the base of the stalk. L10 forms an elongated spine to which L12 dimers bind in a sequential fashion forming a multimeric L10(L12)X complex. One or more lysine residues are methylated.

Functionally, forms part of the ribosomal stalk which helps the ribosome interact with GTP-bound translation factors. This Prochlorococcus marinus (strain SARG / CCMP1375 / SS120) protein is Large ribosomal subunit protein uL11.